The following is a 505-amino-acid chain: AMP phosphorylase (505 aa).

AMP-binding positions include Gly169, 195 to 200, and Thr204; that span reads SRAITG. The active-site Proton donor is Asp257. 2 residues coordinate AMP: Ser265 and Lys289.

This sequence belongs to the thymidine/pyrimidine-nucleoside phosphorylase family. Type 2 subfamily.

The catalysed reaction is AMP + phosphate = alpha-D-ribose 1,5-bisphosphate + adenine. The enzyme catalyses CMP + phosphate = cytosine + alpha-D-ribose 1,5-bisphosphate. It carries out the reaction UMP + phosphate = alpha-D-ribose 1,5-bisphosphate + uracil. Functionally, catalyzes the conversion of AMP and phosphate to adenine and ribose 1,5-bisphosphate (R15P). Exhibits phosphorylase activity toward CMP and UMP in addition to AMP. Functions in an archaeal AMP degradation pathway, together with R15P isomerase and RubisCO. This is AMP phosphorylase from Methanocorpusculum labreanum (strain ATCC 43576 / DSM 4855 / Z).